A 185-amino-acid chain; its full sequence is Guanylate kinase (185 aa).

The Guanylate kinase-like domain occupies 4–181 (GALYVVSGPS…ACNDLISIIE (178 aa)). An ATP-binding site is contributed by 11–18 (GPSGAGKS).

This sequence belongs to the guanylate kinase family.

The protein resides in the cytoplasm. It carries out the reaction GMP + ATP = GDP + ADP. Its function is as follows. Essential for recycling GMP and indirectly, cGMP. This chain is Guanylate kinase, found in Fusobacterium nucleatum subsp. nucleatum (strain ATCC 25586 / DSM 15643 / BCRC 10681 / CIP 101130 / JCM 8532 / KCTC 2640 / LMG 13131 / VPI 4355).